Consider the following 70-residue polypeptide: Melittin-N (70 aa).

An N-terminal signal peptide occupies residues 1–21; that stretch reads MKFLVNVALVFMVVYISYIYA. Residues 22–43 constitute a propeptide, removed by a dipeptidylpeptidase; that stretch reads APEPEPAPEPEAEADAEADPEA. The residue at position 44 (G44) is an N-formylglycine; partial. Q69 is subject to Glutamine amide.

This sequence belongs to the melittin family. As to quaternary structure, monomer (in solution and for integration into membranes), homotetramer (in solution and potentially as a toroidal pore in membranes), and potenially homomultimer (as a toroidal pore in membranes). In terms of tissue distribution, expressed by the venom gland.

The protein localises to the secreted. Its subcellular location is the target cell membrane. In terms of biological role, main toxin of bee venom with strong hemolytic activity and antimicrobial activity. It has enhancing effects on bee venom phospholipase A2 activity. This amphipathic toxin binds to negatively charged membrane surface and forms pore by inserting into lipid bilayers inducing the leakage of ions and molecules and the enhancement of permeability that ultimately leads to cell lysis. It acts as a voltage-gated pore with higher selectivity for anions over cations. The ion conductance has been shown to be voltage-dependent. Self-association of melittin in membranes is promoted by high ionic strength, but not by the presence of negatively charged lipids. In vivo, intradermal injection into healthy human volunteers produce sharp pain sensation and an inflammatory response. It produces pain by activating primary nociceptor cells directly and indirectly due to its ability to activate plasma membrane phospholipase A2 and its pore-forming activity. Shows lower cytotoxicity when tested on E.coli and cancer cell lines than melittin, as well as lower anti-inflammatory properties and lower properties to interact to small unilamellar liposomes. This is Melittin-N (MELT) from Apis cerana (Indian honeybee).